We begin with the raw amino-acid sequence, 402 residues long: B box and SPRY domain-containing protein (402 aa).

The interval 1–20 is disordered; the sequence is MSAEGAEPGPGSGSGPGPGP. A B box-type zinc finger spans residues 17–65; sequence GPGPLCPEHGQALSWFCGSERRPVCAACAGLGGRCRGHRIRRAEERAEE. Positions 212 to 402 constitute a B30.2/SPRY domain; the sequence is PLLTQLWATA…VADQTISIVR (191 aa).

In terms of assembly, interacts with TRPV5 and TRPV6. Interacts with YWHAZ/14-3-3 protein zeta.

It is found in the cytoplasm. The protein localises to the membrane. In terms of biological role, may regulate epithelial calcium transport by inhibiting TRPV5 activity. The chain is B box and SPRY domain-containing protein (BSPRY) from Homo sapiens (Human).